Here is a 638-residue protein sequence, read N- to C-terminus: Phenylethylamine oxidase (638 aa).

Residues 1 to 2 constitute a propeptide that is removed on maturation; that stretch reads MT. Residue 296–307 participates in substrate binding; sequence YFDTGEYLVGQY. The active-site Proton acceptor is the Asp-298. An intrachain disulfide couples Cys-317 to Cys-343. Residue 379 to 384 coordinates substrate; that stretch reads IGNYDY. The active-site Schiff-base intermediate with substrate; via topaquinone is the Tyr-382. Residue Tyr-382 is modified to 2',4',5'-topaquinone. Residues His-431, His-433, and His-592 each contribute to the Cu cation site.

This sequence belongs to the copper/topaquinone oxidase family. Homodimer. Requires Cu cation as cofactor. It depends on L-topaquinone as a cofactor. Topaquinone (TPQ) is generated by copper-dependent autoxidation of a specific tyrosyl residue.

The enzyme catalyses a primary methyl amine + O2 + H2O = an aldehyde + H2O2 + NH4(+). It carries out the reaction 2-phenylethylamine + O2 + H2O = 2-phenylacetaldehyde + H2O2 + NH4(+). In terms of biological role, catalyzes the oxidative deamination of phenylethylamine to phenylacetaldehyde with the concomitant production of hydrogen peroxide and ammonia. The chain is Phenylethylamine oxidase from Arthrobacter globiformis.